Consider the following 218-residue polypeptide: Ribose-5-phosphate isomerase A (218 aa).

Substrate is bound by residues 28–31 (TGST), 81–84 (DGAD), and 94–97 (KGGG). The Proton acceptor role is filled by Glu-103. Lys-121 contributes to the substrate binding site.

It belongs to the ribose 5-phosphate isomerase family. As to quaternary structure, homodimer.

The catalysed reaction is aldehydo-D-ribose 5-phosphate = D-ribulose 5-phosphate. The protein operates within carbohydrate degradation; pentose phosphate pathway; D-ribose 5-phosphate from D-ribulose 5-phosphate (non-oxidative stage): step 1/1. In terms of biological role, catalyzes the reversible conversion of ribose-5-phosphate to ribulose 5-phosphate. This chain is Ribose-5-phosphate isomerase A, found in Vibrio cholerae serotype O1 (strain ATCC 39541 / Classical Ogawa 395 / O395).